A 463-amino-acid chain; its full sequence is FAD-dependent monooxygenase ausM (463 aa).

FAD is bound by residues Glu-40, Gly-54, and Arg-113. Residue Tyr-217 is part of the active site. Residues Asp-309 and Ala-322 each coordinate FAD. Residues 443–463 (VPWLVISLPVLASVLCYLMFA) form a helical membrane-spanning segment.

The protein belongs to the paxM FAD-dependent monooxygenase family. It depends on FAD as a cofactor.

Its subcellular location is the membrane. The protein operates within secondary metabolite biosynthesis; terpenoid biosynthesis. In terms of biological role, FAD-dependent monooxygenase; part of the gene cluster that mediates the biosynthesis of calidodehydroaustin, a fungal meroterpenoid. The first step of the pathway is the synthesis of 3,5-dimethylorsellinic acid by the polyketide synthase ausA. 3,5-dimethylorsellinic acid is then prenylated by the polyprenyl transferase ausN. Further epoxidation by the FAD-dependent monooxygenase ausM and cyclization by the probable terpene cyclase ausL lead to the formation of protoaustinoid A. Protoaustinoid A is then oxidized to spiro-lactone preaustinoid A3 by the combined action of the FAD-binding monooxygenases ausB and ausC, and the dioxygenase ausE. Acid-catalyzed keto-rearrangement and ring contraction of the tetraketide portion of preaustinoid A3 by ausJ lead to the formation of preaustinoid A4. The aldo-keto reductase ausK, with the help of ausH, is involved in the next step by transforming preaustinoid A4 into isoaustinone which is in turn hydroxylated by the P450 monooxygenase ausI to form austinolide. The cytochrome P450 monooxygenase ausG modifies austinolide to austinol. Austinol is further acetylated to austin by the O-acetyltransferase ausP, which spontaneously changes to dehydroaustin. The cytochrome P450 monooxygenase ausR then converts dehydroaustin is into 7-dehydrodehydroaustin. The hydroxylation catalyzed by ausR permits the O-acetyltransferase ausQ to add an additional acetyl group to the molecule, leading to the formation of acetoxydehydroaustin. The short chain dehydrogenase ausT catalyzes the reduction of the double bond present between carbon atoms 1 and 2 to convert 7-dehydrodehydroaustin into 1,2-dihydro-7-hydroxydehydroaustin. AusQ catalyzes not only an acetylation reaction but also the addition of the PKS ausV diketide product to 1,2-dihydro-7-hydroxydehydroaustin, forming precalidodehydroaustin. Finally, the iron/alpha-ketoglutarate-dependent dioxygenase converts precalidodehydroaustin into calidodehydroaustin. This is FAD-dependent monooxygenase ausM from Aspergillus calidoustus.